The primary structure comprises 352 residues: tRNA-specific 2-thiouridylase MnmA (352 aa).

ATP-binding positions include 7–14 and Leu-33; that span reads GLSGGVDS. Residue Cys-94 is the Nucleophile of the active site. An intrachain disulfide couples Cys-94 to Cys-193. Residue Gly-119 participates in ATP binding. The interaction with tRNA stretch occupies residues 143–145; it reads KDQ. The active-site Cysteine persulfide intermediate is the Cys-193. An interaction with tRNA region spans residues 298-299; the sequence is RY.

Belongs to the MnmA/TRMU family.

It localises to the cytoplasm. It catalyses the reaction S-sulfanyl-L-cysteinyl-[protein] + uridine(34) in tRNA + AH2 + ATP = 2-thiouridine(34) in tRNA + L-cysteinyl-[protein] + A + AMP + diphosphate + H(+). Catalyzes the 2-thiolation of uridine at the wobble position (U34) of tRNA, leading to the formation of s(2)U34. This Microcystis aeruginosa (strain NIES-843 / IAM M-2473) protein is tRNA-specific 2-thiouridylase MnmA.